The sequence spans 235 residues: Protein FEV (235 aa).

Positions 58–138 (IQLWQFLLEL…HGKRYAYKFD (81 aa)) form a DNA-binding region, ETS.

This sequence belongs to the ETS family. As to expression, expressed by serotonergic neurons in anterior and posterior raphe.

It is found in the nucleus. Functionally, functions as a transcriptional regulator. Functions in the differentiation and the maintenance of the central serotonergic neurons. May play a role in cell growth. The chain is Protein FEV (fev) from Danio rerio (Zebrafish).